The chain runs to 34 residues: KNILTVEQPDSSSSDGIFYYDEASKRVQISALAL.

It belongs to the peptidase M67A family. CSN5 subfamily. Component of the CSN complex, probably composed of CSN1, CSN2, CSN3, CSN4, CSN5 (CSN5A or CSN5B), CSN6 (CSN6A or CSN6B), CSN7 and CSN8. It depends on a divalent metal cation as a cofactor.

It localises to the cytoplasm. The protein resides in the nucleus. In terms of biological role, probable protease subunit of the COP9 signalosome complex (CSN), a complex involved in various cellular and developmental processes such as photomorphogenesis and auxin and jasmonate responses. The CSN complex is an essential regulator of the ubiquitin (Ubl) conjugation pathway by mediating the deneddylation of the cullin subunits of the SCF-type E3 ligase complexes, leading to decrease the Ubl ligase activity of SCF. In the complex, it probably acts as the catalytic center that mediates the cleavage of Nedd8 from cullins. It however has no metalloprotease activity by itself and requires the other subunits of the CSN complex. The CSN complex is involved in repression of photomorphogenesis in darkness by regulating the activity of COP1-containing Ubl ligase complexes. The protein is COP9 signalosome complex subunit 5a (CSN5A) of Brassica oleracea (Wild cabbage).